Consider the following 132-residue polypeptide: Small ribosomal subunit protein uS8 (132 aa).

This sequence belongs to the universal ribosomal protein uS8 family. Part of the 30S ribosomal subunit. Contacts proteins S5 and S12.

Its function is as follows. One of the primary rRNA binding proteins, it binds directly to 16S rRNA central domain where it helps coordinate assembly of the platform of the 30S subunit. This chain is Small ribosomal subunit protein uS8, found in Pseudarthrobacter chlorophenolicus (strain ATCC 700700 / DSM 12829 / CIP 107037 / JCM 12360 / KCTC 9906 / NCIMB 13794 / A6) (Arthrobacter chlorophenolicus).